The following is a 214-amino-acid chain: Thiamine-phosphate synthase (214 aa).

4-amino-2-methyl-5-(diphosphooxymethyl)pyrimidine is bound by residues Gln37–Lys41 and Asn73. Residues Asp74 and Asp93 each coordinate Mg(2+). Ser112 contacts 4-amino-2-methyl-5-(diphosphooxymethyl)pyrimidine. Thr139 to Ser141 contributes to the 2-[(2R,5Z)-2-carboxy-4-methylthiazol-5(2H)-ylidene]ethyl phosphate binding site. 4-amino-2-methyl-5-(diphosphooxymethyl)pyrimidine is bound at residue Lys142. 2-[(2R,5Z)-2-carboxy-4-methylthiazol-5(2H)-ylidene]ethyl phosphate contacts are provided by residues Gly171 and Ile191–Ser192.

This sequence belongs to the thiamine-phosphate synthase family. It depends on Mg(2+) as a cofactor.

The catalysed reaction is 2-[(2R,5Z)-2-carboxy-4-methylthiazol-5(2H)-ylidene]ethyl phosphate + 4-amino-2-methyl-5-(diphosphooxymethyl)pyrimidine + 2 H(+) = thiamine phosphate + CO2 + diphosphate. The enzyme catalyses 2-(2-carboxy-4-methylthiazol-5-yl)ethyl phosphate + 4-amino-2-methyl-5-(diphosphooxymethyl)pyrimidine + 2 H(+) = thiamine phosphate + CO2 + diphosphate. It carries out the reaction 4-methyl-5-(2-phosphooxyethyl)-thiazole + 4-amino-2-methyl-5-(diphosphooxymethyl)pyrimidine + H(+) = thiamine phosphate + diphosphate. Its pathway is cofactor biosynthesis; thiamine diphosphate biosynthesis; thiamine phosphate from 4-amino-2-methyl-5-diphosphomethylpyrimidine and 4-methyl-5-(2-phosphoethyl)-thiazole: step 1/1. Its function is as follows. Condenses 4-methyl-5-(beta-hydroxyethyl)thiazole monophosphate (THZ-P) and 2-methyl-4-amino-5-hydroxymethyl pyrimidine pyrophosphate (HMP-PP) to form thiamine monophosphate (TMP). This chain is Thiamine-phosphate synthase, found in Listeria innocua serovar 6a (strain ATCC BAA-680 / CLIP 11262).